The primary structure comprises 181 residues: ATP-dependent protease subunit HslV (181 aa).

The active site involves Thr9. Na(+) contacts are provided by Ala166, Cys169, and Thr172.

It belongs to the peptidase T1B family. HslV subfamily. In terms of assembly, a double ring-shaped homohexamer of HslV is capped on each side by a ring-shaped HslU homohexamer. The assembly of the HslU/HslV complex is dependent on binding of ATP.

The protein resides in the cytoplasm. It carries out the reaction ATP-dependent cleavage of peptide bonds with broad specificity.. Allosterically activated by HslU binding. Protease subunit of a proteasome-like degradation complex believed to be a general protein degrading machinery. This Staphylococcus aureus (strain JH1) protein is ATP-dependent protease subunit HslV.